The chain runs to 727 residues: Glucans biosynthesis glucosyltransferase H (727 aa).

The segment at 18–38 (SAMPNERPGAMEPQNLSKMPE) is disordered. The next 7 helical transmembrane spans lie at 58–78 (FLVVGGALLLSLFAIYEMGAV), 97–117 (VNFCWIALAFCSGIAGFLILL), 278–298 (LQQFAARIYGPVIGTGLGWWV), 408–428 (IMAYLSSPFWLMLILTGLMLA), 460–480 (LFYITMGVLFGPKIFGVLLLL), 496–516 (IFSVIFEVILSALIAPIMMFI), and 572–592 (LLAWMSPALIGLWIAVPISAW).

This sequence belongs to the glycosyltransferase 2 family. OpgH subfamily.

It localises to the cell inner membrane. Its pathway is glycan metabolism; osmoregulated periplasmic glucan (OPG) biosynthesis. In terms of biological role, involved in the biosynthesis of osmoregulated periplasmic glucans (OPGs). The protein is Glucans biosynthesis glucosyltransferase H of Shewanella baltica (strain OS223).